We begin with the raw amino-acid sequence, 425 residues long: MAVAVGRPSNEELRNLSLSGHVGFDSLPDQLVNKSTSQGFCFNILCVGETGIGKSTLMDTLFNTKFESDPATHNEPGVRLKARSYELQESNVRLKLTIVDTVGFGDQINKDDSYKPIVEYIDAQFEAYLQEELKIKRSLFNYHDTRIHACLYFIAPTGHSLKSLDLVTMKKLDSKVNIIPIIAKADTIAKNELHKFKSKIMSELVSNGVQIYQFPTDEETVAEINATMSVHLPFAVVGSTEEVKIGNKMAKARQYPWGVVQVENENHCDFVKLREMLIRVNMEDLREQTHTRHYELYRRCKLEEMGFKDTDPDSKPFSLQETYEAKRNEFLGELQKKEEEMRQMFVMRVKEKEAELKEAEKELHEKFDLLKRTHQEEKKKVEDKKKELEEEVNNFQKKKAAAQLLQSQAQQSGAQQTKKDKDKKN.

N-acetylalanine is present on Ala2. Phosphoserine is present on Ser9. The 267-residue stretch at 38-304 (QGFCFNILCV…ELYRRCKLEE (267 aa)) folds into the Septin-type G domain. A G1 motif region spans residues 48-55 (GETGIGKS). GTP is bound by residues 48–55 (GETGIGKS), Gly103, 184–192 (KADTIAKNE), Gly238, and Arg253. Residues 100-103 (DTVG) form a G3 motif region. Residues 183–186 (AKAD) are G4 motif. Residues 320-410 (QETYEAKRNE…AAQLLQSQAQ (91 aa)) are a coiled coil. The disordered stretch occupies residues 399–425 (KAAAQLLQSQAQQSGAQQTKKDKDKKN). Residues 401–416 (AAQLLQSQAQQSGAQQ) show a composition bias toward low complexity.

The protein belongs to the TRAFAC class TrmE-Era-EngA-EngB-Septin-like GTPase superfamily. Septin GTPase family. In terms of assembly, septins polymerize into heterooligomeric protein complexes that form filaments, and can associate with cellular membranes, actin filaments and microtubules. Forms homooligomers. GTPase activity is required for filament formation. Interacts with SEPTIN7, SEPTIN9 and SEPTIN12.

It is found in the cytoplasm. The protein resides in the cytoskeleton. It localises to the synapse. Its subcellular location is the cell projection. The protein localises to the dendritic spine. It is found in the axon. Its function is as follows. Filament-forming cytoskeletal GTPase. May play a role in cytokinesis (Potential). May play a role in the cytoarchitecture of neurons, including dendritic arborization and dendritic spines, and in GABAergic synaptic connectivity. The polypeptide is Septin-11 (Bos taurus (Bovine)).